The sequence spans 201 residues: Glycerol-3-phosphate acyltransferase (201 aa).

Helical transmembrane passes span L4–T24, L55–L75, M80–F100, I110–V130, and F152–Y174.

This sequence belongs to the PlsY family. As to quaternary structure, probably interacts with PlsX.

It is found in the cell inner membrane. The catalysed reaction is an acyl phosphate + sn-glycerol 3-phosphate = a 1-acyl-sn-glycero-3-phosphate + phosphate. It participates in lipid metabolism; phospholipid metabolism. Catalyzes the transfer of an acyl group from acyl-phosphate (acyl-PO(4)) to glycerol-3-phosphate (G3P) to form lysophosphatidic acid (LPA). This enzyme utilizes acyl-phosphate as fatty acyl donor, but not acyl-CoA or acyl-ACP. The sequence is that of Glycerol-3-phosphate acyltransferase from Paramagnetospirillum magneticum (strain ATCC 700264 / AMB-1) (Magnetospirillum magneticum).